Consider the following 96-residue polypeptide: MSDDENRGSHDLRMPDDDEVFAVVTNMLGANRVTVRCADGNERTARIPGRMQKRIWIREDDVVLVEPWDWQDEKGDITWRYEKSEADQLREEGRIR.

The region spanning 8–82 (GSHDLRMPDD…EKGDITWRYE (75 aa)) is the S1-like domain.

This sequence belongs to the eIF-1A family.

Seems to be required for maximal rate of protein biosynthesis. Enhances ribosome dissociation into subunits and stabilizes the binding of the initiator Met-tRNA(I) to 40 S ribosomal subunits. The sequence is that of Translation initiation factor 1A 1 from Haloquadratum walsbyi (strain DSM 16790 / HBSQ001).